We begin with the raw amino-acid sequence, 411 residues long: Phosphopentomutase (411 aa).

The Mn(2+) site is built by aspartate 14, aspartate 306, histidine 311, aspartate 347, histidine 348, and histidine 359.

It belongs to the phosphopentomutase family. Mn(2+) serves as cofactor.

The protein localises to the cytoplasm. It catalyses the reaction 2-deoxy-alpha-D-ribose 1-phosphate = 2-deoxy-D-ribose 5-phosphate. The catalysed reaction is alpha-D-ribose 1-phosphate = D-ribose 5-phosphate. It participates in carbohydrate degradation; 2-deoxy-D-ribose 1-phosphate degradation; D-glyceraldehyde 3-phosphate and acetaldehyde from 2-deoxy-alpha-D-ribose 1-phosphate: step 1/2. Its function is as follows. Isomerase that catalyzes the conversion of deoxy-ribose 1-phosphate (dRib-1-P) and ribose 1-phosphate (Rib-1-P) to deoxy-ribose 5-phosphate (dRib-5-P) and ribose 5-phosphate (Rib-5-P), respectively. This Lactococcus lactis subsp. lactis (strain IL1403) (Streptococcus lactis) protein is Phosphopentomutase.